The primary structure comprises 289 residues: NADPH-dependent 7-cyano-7-deazaguanine reductase (289 aa).

Substrate is bound at residue 81-83 (IES). 83–84 (SK) is an NADPH binding site. Residue C196 is the Thioimide intermediate of the active site. The active-site Proton donor is the D203. 235–236 (HE) provides a ligand contact to substrate. Residue 264–265 (RG) participates in NADPH binding.

This sequence belongs to the GTP cyclohydrolase I family. QueF type 2 subfamily. As to quaternary structure, homodimer.

It localises to the cytoplasm. The catalysed reaction is 7-aminomethyl-7-carbaguanine + 2 NADP(+) = 7-cyano-7-deazaguanine + 2 NADPH + 3 H(+). It participates in tRNA modification; tRNA-queuosine biosynthesis. Functionally, catalyzes the NADPH-dependent reduction of 7-cyano-7-deazaguanine (preQ0) to 7-aminomethyl-7-deazaguanine (preQ1). This chain is NADPH-dependent 7-cyano-7-deazaguanine reductase, found in Albidiferax ferrireducens (strain ATCC BAA-621 / DSM 15236 / T118) (Rhodoferax ferrireducens).